The primary structure comprises 373 residues: MRLPMQKLLIPTLLGLAMFAGSVNAAAPLRPPQGYFAPVEAFKTGDFKNDCDAMPPPYTGSLQFRSKYEGSDKARSTLNVQSEKAFRDSTADITKLEKDTSKRVMQFMRDGRPEQLECTLNWLTSWAKADALMSKDFNHTGKSMRKWALGSMASAYVRLKFSDSHPLANHQQESQLIEAWFNKLADQVVSDWDNLPLEKTNNHSYWAAWSVMATSVATNRRDLFDWAVKEYKVGVNQVDDQGFLPNELKRQQRALSYHNYALPPLSMIASFALVNGVDLRQENNSALKRLGDKVLAGVKDPEIFEKKNGKEQDMKDLKEDMKYAWLEPFCTLYTCAPDVIERKHGMQPFKTFRLGGDLTKVYDPTHEKGNKGS.

The first 25 residues, 1 to 25 (MRLPMQKLLIPTLLGLAMFAGSVNA), serve as a signal peptide directing secretion. Residues 66–67 (SK), 139–140 (HT), and Tyr257 each bind substrate.

This sequence belongs to the polysaccharide lyase 5 family.

It localises to the periplasm. The enzyme catalyses Eliminative cleavage of alginate to give oligosaccharides with 4-deoxy-alpha-L-erythro-hex-4-enuronosyl groups at their non-reducing ends and beta-D-mannuronate at their reducing end.. Its function is as follows. Catalyzes the depolymerization of alginate by cleaving the beta-1,4 glycosidic bond between two adjacent sugar residues via a beta-elimination mechanism. May serve to degrade mislocalized alginate that is trapped in the periplasmic space. This is Alginate lyase from Pseudomonas fluorescens.